The primary structure comprises 1283 residues: Rab11 family-interacting protein 1 (1283 aa).

One can recognise a C2 domain in the interval 1–126 (MSLMVSAGRG…DQGRRKTQWY (126 aa)). The segment covering 161–185 (SMKDKSRNPFGKLKDKIKGKNKDSG) has biased composition (basic and acidic residues). The disordered stretch occupies residues 161-281 (SMKDKSRNPF…VMSHKRTAST (121 aa)). S184, S202, S206, and S234 each carry phosphoserine. The span at 225–239 (NLQKTPLSQSMSVLP) shows a compositional bias: polar residues. Acidic residues predominate over residues 257–266 (WDEDDNEDES). S300, S315, S339, S341, S343, S345, S356, S357, and S382 each carry phosphoserine. Disordered stretches follow at residues 330-727 (EAKG…QEVP), 741-782 (VGEL…ASVP), 835-913 (PQEL…LFRM), 969-993 (DERIDQVEDDGDQVEDDGETAKSST), and 1037-1141 (ASVT…RVEN). Positions 419–433 (ATKEAKESKKPESRR) are enriched in basic and acidic residues. S435 is modified (phosphoserine). The span at 442–451 (GKKDVAKGSE) shows a compositional bias: basic and acidic residues. Phosphoserine is present on S477. Basic and acidic residues predominate over residues 482–491 (DLVRRSEKDT). 2 positions are modified to phosphoserine: S529 and S545. Low complexity predominate over residues 588-612 (SSESPSVFSSLSSPIAAPISTSTPI). The segment covering 637-652 (QTESLTPVPNSGSSAL) has biased composition (polar residues). The span at 698–715 (ETGRQEEELPRFPCKKQD) shows a compositional bias: basic and acidic residues. The residue at position 758 (S758) is a Phosphoserine. The segment covering 855–866 (ESPHAEDSERES) has biased composition (basic and acidic residues). Over residues 975-986 (VEDDGDQVEDDG) the composition is skewed to acidic residues. Residues 1037–1048 (ASVTAPSEQTTE) are compositionally biased toward polar residues. Over residues 1116 to 1131 (SDTHHTSTAESQKKAT) the composition is skewed to basic and acidic residues. A Phosphoserine modification is found at S1135. In terms of domain architecture, FIP-RBD spans 1211 to 1273 (KKYSPSDPAF…EETPNILRIP (63 aa)). A necessary for interaction with RAB4A and RAB11A, subcellular location and endosomal recycling region spans residues 1219 to 1283 (AFAYAQLTHD…TQVGKKAGKM (65 aa)).

In terms of assembly, interacts with RAB11A (GTP-bound form); the interaction induces RAB11FIP1 recruitment to membranes. Interacts with RAB14 (GTP-bound form). As to quaternary structure, homooligomer. Isoform 2 interacts with RAB4A, RAB11A, RAB11B and RAB25. According to PubMed:15280022, RAB4A binding to RAB11FIP1 is of very low affinity in vitro and in vivo. Isoform 2 is expressed in brain, heart, testis, lung, spleen, ovary and small intestine.

It is found in the recycling endosome. Its subcellular location is the cytoplasmic vesicle. The protein resides in the phagosome membrane. Its function is as follows. A Rab11 effector protein involved in the endosomal recycling process. Also involved in controlling membrane trafficking along the phagocytic pathway and in phagocytosis. Interaction with RAB14 may function in the process of neurite formation. This is Rab11 family-interacting protein 1 from Homo sapiens (Human).